Reading from the N-terminus, the 253-residue chain is Chemotaxis protein PomA (253 aa).

The next 4 membrane-spanning stretches (helical) occupy residues 6 to 26 (LLGLIGGFAFVIMAMVLGGSI), 28 to 48 (MFVDVTSILIVVGGSIFVVLM), 146 to 166 (FGDVAPAMGMIGTLVGLVAML), and 180 to 200 (AVALLTTLYGAILSNMVFFPI). Residues 201-253 (ADKLSLRRDQETLNRRLIMDGVLAIQDGQNPRVIDSYLKNYLNEGKRALEIDE) are Cytoplasmic-facing.

It belongs to the MotA family. As to quaternary structure, each stator complex is composed of 4 PomA and 2 PomB subunits. 2 A subunits and 1 B subunit are thought to form a single ion channel, so that each stator complex contains two channels.

It is found in the cell inner membrane. Functionally, pomA and PomB comprise the stator element of the flagellar motor complex. Required for rotation of the flagellar motor. Probable transmembrane proton channel. The sequence is that of Chemotaxis protein PomA (pomA) from Vibrio alginolyticus.